We begin with the raw amino-acid sequence, 194 residues long: RNA polymerase II subunit A C-terminal domain phosphatase SSU72 like protein 6 (194 aa).

The protein belongs to the SSU72 phosphatase family.

It is found in the nucleus. The catalysed reaction is O-phospho-L-seryl-[protein] + H2O = L-seryl-[protein] + phosphate. It carries out the reaction O-phospho-L-threonyl-[protein] + H2O = L-threonyl-[protein] + phosphate. Protein phosphatase that catalyzes the dephosphorylation of the C-terminal domain of RNA polymerase II. Plays a role in RNA processing and termination. The polypeptide is RNA polymerase II subunit A C-terminal domain phosphatase SSU72 like protein 6 (Homo sapiens (Human)).